We begin with the raw amino-acid sequence, 940 residues long: MEGGKLLGVAHPEPANNIDADLRYDLGQSRMQVDGPVVLNRSAELEPSDSMAIDDVPVEASSQPAPAKQSPALMDTIVEVQKQLKRKRASSGPALAAADKDALVAGCCQELEGLLEYYREVSGHRMQFEVGNLSTNAAIGCLLEESSLGLSKLVDEIYEKLKGMEGVSATSVRSSVLLIGQRMMYGQSSPDADVLEDESETALWCWEVRDLKVIPLRMRGPLSTRRTARKKIHERITAIYSTLSVLEAPGAEAQVNDMRKASLKLSKALNLEGIKSLVERATQKSNIERGAKNTGSTAKEPMQEMVKSNNDTGIIENVDDSQLQKNTSTNEKDTQKAQKQVEKELKQKEKEEARMRKQQKKQQEEALREQKRREKEEAEMKKQQRKQEEEAQKEQKRREKEEAETRKQQKKQQEEAEKEQKRREKEAVQLKKQLAIQKQASMMERFFKNKKDSEKLEKPGGKDSGVQTTDPCTTNKEVVPLVTSIIDSSFSQKENWALEDLRRLQISGWQKLSSYNRSSRWGIRNKPKKEAFKELKLQKTSDNMLEEILSPNEDTCHNLSQENEPDKSANDVDMLPAVELQFHGTNHANPLPTRSIKRKLLQFDKSNRPAYYGTWRKKSAVVGPRCPLKMDPDLDYEVDSDDEWEEEDPGESLSDCEKDNDEVMEEDSKITDEESEDSFFVPDGYLSDNEGIQIESLLDDKDEASSSPPDQCAEVEEFRALLRQQKVLNTLTEQALRKSQPLVISNLTHEKAELLTAGDLKGTSKIEQLCLQVLSMRICPGGATIDLPVIDSSSANAEETNQLNVKSSPAAASAIPDTDLAEIVKVIGSCRDGINKLVESLHQKFPNVSKSQLKNKVREISEFVDNRWQVKKEVLSKLGLSSSPASSKKPKSIATYFSKRCLPPEEAILASPELRLKSKTTQNVNGDTDIPRINLLPSSQ.

Disordered regions lie at residues 317 to 473 (NVDD…DPCT), 638 to 682 (VDSD…FFVP), and 919 to 940 (KTTQNVNGDTDIPRINLLPSSQ). Positions 320–329 (DSQLQKNTST) are enriched in polar residues. Residues 329–439 (TNEKDTQKAQ…LKKQLAIQKQ (111 aa)) adopt a coiled-coil conformation. Over residues 330-429 (NEKDTQKAQK…QKRREKEAVQ (100 aa)) the composition is skewed to basic and acidic residues. Low complexity predominate over residues 430–440 (LKKQLAIQKQA). A compositionally biased stretch (basic and acidic residues) spans 445-461 (RFFKNKKDSEKLEKPGG). Positions 638-650 (VDSDDEWEEEDPG) are enriched in acidic residues.

The protein belongs to the CHAF1A family. In terms of assembly, component of the chromatin assembly factor 1 (CAF-1) complex, composed of FSM (FAS1), FAS2 and MSI1. In embryo, expressed in leaf primordia, coleoptile and radicle. In seedlings, expressed in cell division zone of roots, SAM and leaf primordia. Expressed in floral organ primordia.

The protein localises to the nucleus. Its function is as follows. Component of the chromatin assembly factor complex (CAF-1) involved in chromatin assembly following DNA replication and DNA repair. Required for several aspects of development, including apical meristem maintenance by regulating the durations of the S- and G2-phases of the cell cycle through its chromatin assembly activity. The polypeptide is Chromatin assembly factor 1 subunit FSM (FSM) (Oryza sativa subsp. japonica (Rice)).